The primary structure comprises 209 residues: Zinc finger SWIM domain-containing protein sws1 (209 aa).

A compositionally biased stretch (polar residues) spans 1–30 (MQQGHFTSNSYHSKTLNSSSLPVSSKFSHT). The tract at residues 1-33 (MQQGHFTSNSYHSKTLNSSSLPVSSKFSHTNDP) is disordered. The segment at 143-203 (TTIDLKYWYC…HILAASILRA (61 aa)) adopts an SWIM-type zinc-finger fold.

As to quaternary structure, interacts with rdl1, rlp1 and srs2.

It localises to the cytoplasm. The protein localises to the nucleus. Its subcellular location is the nucleoplasm. Functionally, involved in early stages of the homologous recombination repair (HRR) pathway of double-stranded DNA breaks arising during DNA replication or induced by DNA-damaging agents. This Schizosaccharomyces pombe (strain 972 / ATCC 24843) (Fission yeast) protein is Zinc finger SWIM domain-containing protein sws1 (sws1).